Consider the following 31-residue polypeptide: Cytochrome b6-f complex subunit 6 (31 aa).

The helical transmembrane segment at 3–23 threads the bilayer; sequence ILISYFCFLLVFFLFTLILFI.

The protein belongs to the PetL family. The 4 large subunits of the cytochrome b6-f complex are cytochrome b6, subunit IV (17 kDa polypeptide, PetD), cytochrome f and the Rieske protein, while the 4 small subunits are PetG, PetL, PetM and PetN. The complex functions as a dimer.

Its subcellular location is the plastid. The protein resides in the chloroplast thylakoid membrane. Component of the cytochrome b6-f complex, which mediates electron transfer between photosystem II (PSII) and photosystem I (PSI), cyclic electron flow around PSI, and state transitions. PetL is important for photoautotrophic growth as well as for electron transfer efficiency and stability of the cytochrome b6-f complex. The polypeptide is Cytochrome b6-f complex subunit 6 (Welwitschia mirabilis (Tree tumbo)).